We begin with the raw amino-acid sequence, 163 residues long: MAFSKDPRRTSLRDSSVEMSSGTQPSCAPKAMPTAHVTFLIDCATGKQVSLAASTAPPHASRANQGCVAPPMKTFVMFRGKTTMLGTQNISLSRGALDGAKDTLPPYRGLGAPHSLPASLPGPQNDPKAQGSSLKPGATEKHSTREKVKHSLKALTCLCGQVE.

A compositionally biased stretch (basic and acidic residues) spans 1-16; it reads MAFSKDPRRTSLRDSS. 2 disordered regions span residues 1–30 and 96–149; these read MAFSKDPRRTSLRDSSVEMSSGTQPSCAPK and ALDG…EKVK. A compositionally biased stretch (polar residues) spans 17 to 26; it reads VEMSSGTQPS.

Interacts with 14-3-3 proteins.

May regulate the transcriptional function of androgen and estrogen receptors. The sequence is that of Steroid receptor-associated and regulated protein from Mus musculus (Mouse).